An 89-amino-acid polypeptide reads, in one-letter code: Small ribosomal subunit protein uS15 (89 aa).

Residues 1-18 show a composition bias toward basic and acidic residues; it reads MSLDTAEKQKLIENHQVH. Residues 1–23 form a disordered region; that stretch reads MSLDTAEKQKLIENHQVHPTDTG.

It belongs to the universal ribosomal protein uS15 family. As to quaternary structure, part of the 30S ribosomal subunit. Forms a bridge to the 50S subunit in the 70S ribosome, contacting the 23S rRNA.

Functionally, one of the primary rRNA binding proteins, it binds directly to 16S rRNA where it helps nucleate assembly of the platform of the 30S subunit by binding and bridging several RNA helices of the 16S rRNA. Its function is as follows. Forms an intersubunit bridge (bridge B4) with the 23S rRNA of the 50S subunit in the ribosome. This Prochlorococcus marinus (strain MIT 9301) protein is Small ribosomal subunit protein uS15.